Here is a 304-residue protein sequence, read N- to C-terminus: Putative ankyrin repeat protein R598 (304 aa).

7 ANK repeats span residues 7 to 36 (NIVTDIKNAICKDDLDSFIILMENNPSINL), 77 to 107 (YISTVLREEVIKNCSVKILKYLFDMGLPVDF), 122 to 151 (GSNHYIKENPGQDTLSLLRLLIEYGVDVNA), 152 to 181 (HNYLPLYSAVSSKNFDKVKLLVENGANVLR), 183 to 209 (ANGNENSFYFKIDSIKYLLDNGVEIDM), 210 to 239 (NLSRALFLSIKDNSIECIQFYLELGADINK), and 265 to 293 (FDFTSLNKLAGNNNERIIDVLINEANVDI).

This chain is Putative ankyrin repeat protein R598, found in Acanthamoeba polyphaga (Amoeba).